The following is a 454-amino-acid chain: Transmembrane protease serine 3 (454 aa).

Residues 1–48 (MGENDPPAVEAPFSFRSLFGLDDLKISPVAPDADAVAAQILSLLPLKF) are Cytoplasmic-facing. A helical; Signal-anchor for type II membrane protein transmembrane segment spans residues 49-69 (FPIIVIGIIALILALAIGLGI). The Extracellular segment spans residues 70–454 (HFDCSGKYRC…HEQMERDLKT (385 aa)). The region spanning 72 to 108 (DCSGKYRCRSSFKCIELIARCDGVSDCKDGEDEYRCV) is the LDL-receptor class A domain. Intrachain disulfides connect C73/C85, C79/C98, C92/C107, C129/C194, C142/C204, C207/C324, C242/C258, C338/C407, C370/C386, and C397/C425. Positions 109–205 (RVGGQNAVLQ…SGHVVTLQCT (97 aa)) constitute an SRCR domain. The Peptidase S1 domain maps to 217-449 (IVGGNMSLLS…FLDWIHEQME (233 aa)). N221 carries N-linked (GlcNAc...) asparagine glycosylation. Residues H257 and D304 each act as charge relay system in the active site. The active-site Charge relay system is the S401.

Belongs to the peptidase S1 family. Post-translationally, undergoes autoproteolytic activation. Expressed in many tissues including fetal cochlea. Isoform T is found at increased levels in some carcinomas.

It localises to the endoplasmic reticulum membrane. In terms of biological role, probable serine protease that plays a role in hearing. Acts as a permissive factor for cochlear hair cell survival and activation at the onset of hearing and is required for saccular hair cell survival. Activates ENaC (in vitro). The sequence is that of Transmembrane protease serine 3 (TMPRSS3) from Homo sapiens (Human).